The primary structure comprises 927 residues: Probable UDP-N-acetylglucosamine--peptide N-acetylglucosaminyltransferase SPINDLY (927 aa).

The disordered stretch occupies residues 1–31 (MGRPGMDSSEGRESNGVVPERNGGAVPAKQQ). 11 TPR repeats span residues 34–67 (GKDT…DEAN), 68–101 (VEAL…DPGN), 102–135 (ACAL…DPSY), 143–176 (AIVL…DSHY), 177–210 (APAY…RPLY), 211–244 (AEAY…SPNF), 252–285 (AIAL…NWHY), 286–319 (ADAM…NPRC), 320–353 (AEAC…KPNF), 355–387 (QSLN…NSTY), and 388–421 (AEAY…DPDS). The interval 422–927 (RNAGQNRLLA…KVEANGHISR (506 aa)) is catalytic region.

Belongs to the glycosyltransferase 41 family. O-GlcNAc transferase subfamily.

The protein resides in the nucleus. The enzyme catalyses L-seryl-[protein] + UDP-N-acetyl-alpha-D-glucosamine = 3-O-(N-acetyl-beta-D-glucosaminyl)-L-seryl-[protein] + UDP + H(+). It catalyses the reaction L-threonyl-[protein] + UDP-N-acetyl-alpha-D-glucosamine = 3-O-(N-acetyl-beta-D-glucosaminyl)-L-threonyl-[protein] + UDP + H(+). It functions in the pathway protein modification; protein glycosylation. Functionally, probable O-linked N-acetylglucosamine transferase (OGT) involved in various processes such as gibberellin (GA) signaling pathway. OGTs catalyze the addition of nucleotide-activated sugars directly onto the polypeptide through O-glycosidic linkage with the hydroxyl of serine or threonine. Probably acts by adding O-linked sugars to yet unknown proteins. In Oryza sativa subsp. japonica (Rice), this protein is Probable UDP-N-acetylglucosamine--peptide N-acetylglucosaminyltransferase SPINDLY (SPY).